The chain runs to 778 residues: DEK domain-containing chromatin-associated protein 4 (778 aa).

Disordered regions lie at residues M1–R334 and L475–E689. The span at A14–A26 shows a compositional bias: polar residues. Basic and acidic residues-rich tracts occupy residues E40–D95, A121–G153, E165–N185, and T209–K243. The stretch at K191–R300 forms a coiled coil. Over residues D244–D286 the composition is skewed to acidic residues. Composition is skewed to basic and acidic residues over residues K287–K296 and G303–P323. The Nuclear localization signal 1 motif lies at D289–K296. The Nuclear localization signal 2 signature appears at P489–A496. The segment covering K491–K502 has biased composition (low complexity). Positions D526 to K587 form a coiled coil. Composition is skewed to acidic residues over residues D527 to E553 and S560 to E582. The Nuclear localization signal 3 signature appears at P618–R625. Residues A621–K631 are compositionally biased toward basic residues. Basic and acidic residues predominate over residues K678–E689. The 56-residue stretch at E685–T740 folds into the DEK-C domain. DNA-binding regions lie at residues D703–D717 and K732–Q736. A coiled-coil region spans residues K732 to K766. Residues K741–A778 are disordered. Residues E745–E763 show a composition bias toward acidic residues. The span at K764–A778 shows a compositional bias: basic and acidic residues.

As to quaternary structure, interacts with DEK3.

The protein resides in the nucleus. The protein localises to the nucleolus. Its function is as follows. Chromatin-associated protein which contributes to the modulation of chromatin structure (such as super-helical structure of DNA) and function. Binds to chromatin of protein-coding genes throughout the genome to regulate nucleosome occupancy and chromatin accessibility, and to modulate the expression of target genes. The protein is DEK domain-containing chromatin-associated protein 4 of Arabidopsis thaliana (Mouse-ear cress).